Reading from the N-terminus, the 199-residue chain is FMN-dependent NADH:quinone oxidoreductase (199 aa).

FMN-binding positions include Ser9, 15 to 17 (SNS), and 95 to 98 (MYNF).

Belongs to the azoreductase type 1 family. Homodimer. FMN is required as a cofactor.

It carries out the reaction 2 a quinone + NADH + H(+) = 2 a 1,4-benzosemiquinone + NAD(+). It catalyses the reaction N,N-dimethyl-1,4-phenylenediamine + anthranilate + 2 NAD(+) = 2-(4-dimethylaminophenyl)diazenylbenzoate + 2 NADH + 2 H(+). Quinone reductase that provides resistance to thiol-specific stress caused by electrophilic quinones. Its function is as follows. Also exhibits azoreductase activity. Catalyzes the reductive cleavage of the azo bond in aromatic azo compounds to the corresponding amines. The sequence is that of FMN-dependent NADH:quinone oxidoreductase from Aromatoleum aromaticum (strain DSM 19018 / LMG 30748 / EbN1) (Azoarcus sp. (strain EbN1)).